Consider the following 141-residue polypeptide: Transcription antitermination protein NusB (141 aa).

It belongs to the NusB family.

Functionally, involved in transcription antitermination. Required for transcription of ribosomal RNA (rRNA) genes. Binds specifically to the boxA antiterminator sequence of the ribosomal RNA (rrn) operons. The sequence is that of Transcription antitermination protein NusB from Fervidobacterium nodosum (strain ATCC 35602 / DSM 5306 / Rt17-B1).